Consider the following 635-residue polypeptide: Cationic amino acid transporter 4 (635 aa).

3 consecutive transmembrane segments (helical) span residues 42 to 62 (LTLL…TGAV), 66 to 86 (VAGP…LLAA), and 113 to 133 (LWAF…GAAV). 2 N-linked (GlcNAc...) asparagine glycosylation sites follow: Asn151 and Asn195. The helical transmembrane segment at 197–217 (TFSAISLLVILFIVILGFILA) threads the bilayer. The N-linked (GlcNAc...) asparagine glycan is linked to Asn221. A run of 5 helical transmembrane segments spans residues 229–249 (FAPF…YAFV), 270–290 (LAIA…STVL), 318–338 (GFIV…SLLF), 365–385 (QVPV…ALLL), and 391–411 (VQFL…SIIV). Phosphoserine occurs at positions 422 and 427. The chain crosses the membrane as a helical span at residues 478–498 (VTWALGVMLASAITIGCVLVF). The N-linked (GlcNAc...) asparagine glycan is linked to Asn500. 3 consecutive transmembrane segments (helical) span residues 508 to 528 (WGYI…LLVL), 539 to 559 (LFQI…NICL), and 567 to 587 (TWVR…GYGI). Residue Asn601 is glycosylated (N-linked (GlcNAc...) asparagine).

The protein belongs to the amino acid-polyamine-organocation (APC) superfamily. Cationic amino acid transporter (CAT) (TC 2.A.3.3) family.

The protein resides in the membrane. Involved in the transport of the cationic amino acids (arginine, lysine and ornithine). This is Cationic amino acid transporter 4 (SLC7A4) from Homo sapiens (Human).